A 617-amino-acid polypeptide reads, in one-letter code: Dihydroxy-acid dehydratase (617 aa).

Residue aspartate 81 coordinates Mg(2+). Cysteine 122 lines the [2Fe-2S] cluster pocket. Mg(2+) is bound by residues aspartate 123 and lysine 124. The residue at position 124 (lysine 124) is an N6-carboxylysine. Cysteine 195 is a binding site for [2Fe-2S] cluster. A Mg(2+)-binding site is contributed by glutamate 491. The active-site Proton acceptor is the serine 517.

This sequence belongs to the IlvD/Edd family. In terms of assembly, homodimer. [2Fe-2S] cluster is required as a cofactor. The cofactor is Mg(2+).

The enzyme catalyses (2R)-2,3-dihydroxy-3-methylbutanoate = 3-methyl-2-oxobutanoate + H2O. It carries out the reaction (2R,3R)-2,3-dihydroxy-3-methylpentanoate = (S)-3-methyl-2-oxopentanoate + H2O. Its pathway is amino-acid biosynthesis; L-isoleucine biosynthesis; L-isoleucine from 2-oxobutanoate: step 3/4. The protein operates within amino-acid biosynthesis; L-valine biosynthesis; L-valine from pyruvate: step 3/4. Its function is as follows. Functions in the biosynthesis of branched-chain amino acids. Catalyzes the dehydration of (2R,3R)-2,3-dihydroxy-3-methylpentanoate (2,3-dihydroxy-3-methylvalerate) into 2-oxo-3-methylpentanoate (2-oxo-3-methylvalerate) and of (2R)-2,3-dihydroxy-3-methylbutanoate (2,3-dihydroxyisovalerate) into 2-oxo-3-methylbutanoate (2-oxoisovalerate), the penultimate precursor to L-isoleucine and L-valine, respectively. In Caulobacter vibrioides (strain ATCC 19089 / CIP 103742 / CB 15) (Caulobacter crescentus), this protein is Dihydroxy-acid dehydratase.